The sequence spans 488 residues: Protein kinase C and casein kinase substrate in neurons 2 protein (488 aa).

An F-BAR domain is found at 11–282; sequence VEVSSDSFWE…SIKAADAVED (272 aa). Residues 25–274 adopt a coiled-coil conformation; it reads KRTVKRIDDG…GIYRELEQSI (250 aa). An N6-acetyllysine modification is found at Lys53. Residues 163–176 are compositionally biased toward basic and acidic residues; sequence CKEEKLAVSREANS. A disordered region spans residues 163 to 183; the sequence is CKEEKLAVSREANSKADPSLN. Ser273 is modified (phosphoserine). Ser315 is subject to Phosphoserine; by PKC. A disordered region spans residues 316-429; sequence RREKKKAADG…PFDEDTTSGT (114 aa). The segment covering 329–364 has biased composition (polar residues); that stretch reads TGINQTGDQSGQNKPSSNLSVPSNPAQSTQLQSSYN. The NPF1 motif lies at 364–366; that stretch reads NPF. Ser375 is subject to Phosphoserine; by IKKB. Residues 386–396 are compositionally biased toward polar residues; sequence NVSSYEKTQNY. The residue at position 401 (Ser401) is a Phosphoserine. Over residues 406–418 the composition is skewed to polar residues; that stretch reads NNPFSSTDANGDS. The NPF2 motif lies at 407–409; that stretch reads NPF. The NPF3 motif lies at 419-421; that stretch reads NPF. The region spanning 428–488 is the SH3 domain; sequence GTEVRVRALY…YPANYVEAIQ (61 aa). Phosphoserine is present on Ser448.

This sequence belongs to the PACSIN family. In terms of assembly, homodimer. May form heterooligomers with other PACSINs. Interacts (via NPF motifs) with EHD1 (via EH domain). Interacts with EHD3. Interacts (via the SH3 domain) with MICALL1. Interacts with RAC1. Interacts (via SH3 domain) with DNM1, SYN1, SYNJ1 and WASL. Interacts with CAV1. Interacts with TRPV4. Forms a complex with EHD4 and MICALL1; the complex controls CDH5 trafficking and coordinates angiogenesis. In terms of processing, phosphorylated by casein kinase 2 (CK2) and protein kinase C (PKC). Phosphorylation by PKC probably decreases the membrane binding and tubulation capacities of PACSIN2, thereby modulating the lifetime of caveolae. In terms of tissue distribution, widely expressed (at protein level). Isoforms 1/3 are predominantly expressed in heart and in PC-12 cells, a pheochromocytoma cell line (at protein level). Isoforms 2/4 are widely expressed with highest levels in muscle, testis and brain (at protein level).

The protein resides in the cytoplasm. It is found in the cytoskeleton. Its subcellular location is the cytoplasmic vesicle membrane. The protein localises to the cell projection. It localises to the ruffle membrane. The protein resides in the early endosome. It is found in the recycling endosome membrane. Its subcellular location is the cell membrane. The protein localises to the membrane. It localises to the caveola. The protein resides in the cell junction. It is found in the adherens junction. Regulates the morphogenesis and endocytosis of caveolae. Lipid-binding protein that is able to promote the tubulation of the phosphatidic acid-containing membranes it preferentially binds. Plays a role in intracellular vesicle-mediated transport. Involved in the endocytosis of cell-surface receptors like the EGF receptor, contributing to its internalization in the absence of EGF stimulus. Facilitates endothelial front-rear polarity during migration by recruiting EHD4 and MICALL1 to asymmetric adherens junctions between leader and follower cells. This Rattus norvegicus (Rat) protein is Protein kinase C and casein kinase substrate in neurons 2 protein (Pacsin2).